The sequence spans 140 residues: MGFWKFSPFLPLSILVLYQVGIIQAAPFRSALESLPDPAVLPEEESRLLLAALVKDYVQMKVRALEQEQETGGASLDSPRAKRCSNLSTCVLGTYTQDLNKFHTFPQTAIGVGAPGKKRVMARGLERDHGPHIGTSQDAY.

The first 25 residues, 1 to 25 (MGFWKFSPFLPLSILVLYQVGIIQA), serve as a signal peptide directing secretion. The propeptide occupies 26–81 (APFRSALESLPDPAVLPEEESRLLLAALVKDYVQMKVRALEQEQETGGASLDSPRA). The cysteines at positions 84 and 90 are disulfide-linked. Position 115 is a proline amide (P115). Positions 120–140 (VMARGLERDHGPHIGTSQDAY) are excised as a propeptide.

The protein belongs to the calcitonin family.

It localises to the secreted. Calcitonin is a peptide hormone that causes a rapid but short-lived drop in the level of calcium and phosphate in blood by promoting the incorporation of those ions in the bones. Calcitonin function is mediated by the calcitonin receptor/CALCR and the CALCR-RAMP2 (AMYR2) receptor complex. This is Calcitonin (CALCA) from Equus caballus (Horse).